Here is a 115-residue protein sequence, read N- to C-terminus: Large ribosomal subunit protein uL18 (115 aa).

The interval 1-24 is disordered; the sequence is MISKPDKNKLRQKRHTRVRGKISG. Positions 10 to 20 are enriched in basic residues; that stretch reads LRQKRHTRVRG.

The protein belongs to the universal ribosomal protein uL18 family. As to quaternary structure, part of the 50S ribosomal subunit; part of the 5S rRNA/L5/L18/L25 subcomplex. Contacts the 5S and 23S rRNAs.

Functionally, this is one of the proteins that bind and probably mediate the attachment of the 5S RNA into the large ribosomal subunit, where it forms part of the central protuberance. The chain is Large ribosomal subunit protein uL18 from Lactococcus lactis subsp. cremoris (strain MG1363).